A 233-amino-acid chain; its full sequence is Ribonuclease 3 (233 aa).

The 130-residue stretch at 6 to 135 folds into the RNase III domain; that stretch reads QDYLAKEFNI…FIGALYLDQG (130 aa). Glutamate 48 is a Mg(2+) binding site. Aspartate 52 is an active-site residue. Residues aspartate 121 and glutamate 124 each contribute to the Mg(2+) site. Residue glutamate 124 is part of the active site. The region spanning 161–230 is the DRBM domain; it reads DAKTSLQEFL…AQQALDNMRN (70 aa). A disordered region spans residues 205–233; sequence IGEGKGSSKKHAEMQAAQQALDNMRNKNK.

Belongs to the ribonuclease III family. In terms of assembly, homodimer. It depends on Mg(2+) as a cofactor.

The protein resides in the cytoplasm. The catalysed reaction is Endonucleolytic cleavage to 5'-phosphomonoester.. In terms of biological role, digests double-stranded RNA. Involved in the processing of primary rRNA transcript to yield the immediate precursors to the large and small rRNAs (23S and 16S). Processes some mRNAs, and tRNAs when they are encoded in the rRNA operon. Processes pre-crRNA and tracrRNA of type II CRISPR loci if present in the organism. This is Ribonuclease 3 from Limosilactobacillus reuteri (strain DSM 20016) (Lactobacillus reuteri).